Consider the following 232-residue polypeptide: RNA chaperone ProQ (232 aa).

Positions 105-182 are disordered; the sequence is EAKARVQAQR…REEQHTPVSD (78 aa). The span at 117–136 shows a compositional bias: basic and acidic residues; sequence QQAKKREAAAAAGEKEDAPR. The segment covering 137–146 has biased composition (basic residues); the sequence is RERKPRPTTP. Residues 147–177 are compositionally biased toward basic and acidic residues; that stretch reads RRKEGAERKPRSQKPVEKAPKTVKAPREEQH.

Belongs to the ProQ family.

The protein resides in the cytoplasm. In terms of biological role, RNA chaperone with significant RNA binding, RNA strand exchange and RNA duplexing activities. May regulate ProP activity through an RNA-based, post-transcriptional mechanism. In Escherichia coli (strain UTI89 / UPEC), this protein is RNA chaperone ProQ.